We begin with the raw amino-acid sequence, 273 residues long: 4-hydroxy-tetrahydrodipicolinate reductase (273 aa).

NAD(+) is bound by residues 10–15, E36, 100–102, and 124–127; these read GAGGRM, GTT, and SGNM. Residue H157 is the Proton donor/acceptor of the active site. H158 is a binding site for (S)-2,3,4,5-tetrahydrodipicolinate. Residue K161 is the Proton donor of the active site. A (S)-2,3,4,5-tetrahydrodipicolinate-binding site is contributed by 167-168; sequence GT.

The protein belongs to the DapB family.

The protein resides in the cytoplasm. It carries out the reaction (S)-2,3,4,5-tetrahydrodipicolinate + NAD(+) + H2O = (2S,4S)-4-hydroxy-2,3,4,5-tetrahydrodipicolinate + NADH + H(+). The catalysed reaction is (S)-2,3,4,5-tetrahydrodipicolinate + NADP(+) + H2O = (2S,4S)-4-hydroxy-2,3,4,5-tetrahydrodipicolinate + NADPH + H(+). The protein operates within amino-acid biosynthesis; L-lysine biosynthesis via DAP pathway; (S)-tetrahydrodipicolinate from L-aspartate: step 4/4. In terms of biological role, catalyzes the conversion of 4-hydroxy-tetrahydrodipicolinate (HTPA) to tetrahydrodipicolinate. This Rhodopseudomonas palustris (strain BisA53) protein is 4-hydroxy-tetrahydrodipicolinate reductase.